The sequence spans 341 residues: Retinol dehydrogenase 10-A (341 aa).

Residues isoleucine 3–glycine 23 form a helical; Signal-anchor membrane-spanning segment. Leucine 40–valine 64 serves as a coordination point for NADP(+). Substrate is bound at residue serine 197. The Proton acceptor role is filled by tyrosine 210.

The protein belongs to the short-chain dehydrogenases/reductases (SDR) family.

The protein resides in the microsome membrane. It is found in the endoplasmic reticulum membrane. It catalyses the reaction all-trans-retinol + NADP(+) = all-trans-retinal + NADPH + H(+). The protein operates within cofactor metabolism; retinol metabolism. Its function is as follows. Retinol dehydrogenase with a clear preference for NADP. Converts all-trans-retinol to all-trans-retinal. Has no detectable activity towards 11-cis-retinol, 9-cis-retinol and 13-cis-retinol. The sequence is that of Retinol dehydrogenase 10-A (rdh10-a) from Xenopus laevis (African clawed frog).